Consider the following 164-residue polypeptide: FMN reductase (NADH) RutF (164 aa).

It belongs to the non-flavoprotein flavin reductase family. RutF subfamily.

The catalysed reaction is FMNH2 + NAD(+) = FMN + NADH + 2 H(+). In terms of biological role, catalyzes the reduction of FMN to FMNH2 which is used to reduce pyrimidine by RutA via the Rut pathway. The protein is FMN reductase (NADH) RutF of Escherichia coli (strain K12 / MC4100 / BW2952).